We begin with the raw amino-acid sequence, 204 residues long: Methylthioribulose-1-phosphate dehydratase (204 aa).

Zn(2+) is bound by residues histidine 94 and histidine 96.

It belongs to the aldolase class II family. MtnB subfamily. The cofactor is Zn(2+).

It catalyses the reaction 5-(methylsulfanyl)-D-ribulose 1-phosphate = 5-methylsulfanyl-2,3-dioxopentyl phosphate + H2O. It functions in the pathway amino-acid biosynthesis; L-methionine biosynthesis via salvage pathway; L-methionine from S-methyl-5-thio-alpha-D-ribose 1-phosphate: step 2/6. Functionally, catalyzes the dehydration of methylthioribulose-1-phosphate (MTRu-1-P) into 2,3-diketo-5-methylthiopentyl-1-phosphate (DK-MTP-1-P). This is Methylthioribulose-1-phosphate dehydratase from Pseudomonas syringae pv. syringae (strain B728a).